A 369-amino-acid chain; its full sequence is Cytoplasmic tRNA 2-thiolation protein 1 (369 aa).

Belongs to the TtcA family. CTU1/NCS6/ATPBD3 subfamily.

Its subcellular location is the cytoplasm. It functions in the pathway tRNA modification; 5-methoxycarbonylmethyl-2-thiouridine-tRNA biosynthesis. Plays a central role in 2-thiolation of mcm(5)S(2)U at tRNA wobble positions of tRNA(Lys), tRNA(Glu) and tRNA(Gln). Directly binds tRNAs and probably acts by catalyzing adenylation of tRNAs, an intermediate required for 2-thiolation. It is unclear whether it acts as a sulfurtransferase that transfers sulfur from thiocarboxylated URM1 onto the uridine of tRNAs at wobble position. Prior mcm(5) tRNA modification by the elongator complex is required for 2-thiolation. May also be involved in protein urmylation. In Cryptococcus neoformans var. neoformans serotype D (strain JEC21 / ATCC MYA-565) (Filobasidiella neoformans), this protein is Cytoplasmic tRNA 2-thiolation protein 1.